Consider the following 114-residue polypeptide: uncharacterized protein (114 aa).

This is an uncharacterized protein from Methanocaldococcus jannaschii (strain ATCC 43067 / DSM 2661 / JAL-1 / JCM 10045 / NBRC 100440) (Methanococcus jannaschii).